The chain runs to 478 residues: DNA-directed RNA polymerase II subunit RPB1 (478 aa).

Zn(2+) is bound by residues Cys-68, Cys-71, Cys-78, His-81, Cys-108, Cys-111, and Cys-149. Mg(2+) contacts are provided by Asp-474 and Asp-476.

The protein belongs to the RNA polymerase beta' chain family. Component of the RNA polymerase II (Pol II) complex consisting of 12 subunits. In terms of processing, phosphorylation activates POL II.

The protein resides in the nucleus. The enzyme catalyses RNA(n) + a ribonucleoside 5'-triphosphate = RNA(n+1) + diphosphate. Functionally, DNA-dependent RNA polymerase catalyzes the transcription of DNA into RNA using the four ribonucleoside triphosphates as substrates. Largest and catalytic component of RNA polymerase II which synthesizes mRNA precursors and many functional non-coding RNAs. Forms the polymerase active center together with the second largest subunit. Pol II is the central component of the basal RNA polymerase II transcription machinery. It is composed of mobile elements that move relative to each other. RPB1 is part of the core element with the central large cleft, the clamp element that moves to open and close the cleft and the jaws that are thought to grab the incoming DNA template. At the start of transcription, a single-stranded DNA template strand of the promoter is positioned within the central active site cleft of Pol II. A bridging helix emanates from RPB1 and crosses the cleft near the catalytic site and is thought to promote translocation of Pol II by acting as a ratchet that moves the RNA-DNA hybrid through the active site by switching from straight to bent conformations at each step of nucleotide addition. During transcription elongation, Pol II moves on the template as the transcript elongates. Elongation is influenced by the phosphorylation status of the C-terminal domain (CTD) of Pol II largest subunit (RPB1), which serves as a platform for assembly of factors that regulate transcription initiation, elongation, termination and mRNA processing. The sequence is that of DNA-directed RNA polymerase II subunit RPB1 (RPB1) from Euplotoides octocarinatus (Freshwater ciliate).